Here is a 298-residue protein sequence, read N- to C-terminus: Protoheme IX farnesyltransferase (298 aa).

The next 9 helical transmembrane spans lie at 28 to 48 (VVALLLLTAVVGMCLATEELV), 50 to 70 (LKVLVPALTGIGLMSAAAAAI), 95 to 117 (LSPAKVTTFAASIGVIGFVTLYA), 121 to 138 (PLTAWLTFASMVGYAVVY), 149 to 169 (NIVIGGLAGAAPPLLGWTSVT), 176 to 196 (AVLLVMIIFTWTPPHFWALAV), 222 to 242 (CIFLYTVLLTVVCLMPFLIGM), 243 to 263 (TGMIYLVGVSVLNAIFLAYAW), and 274 to 294 (AFNMFAFSIWHLMLLFVILLV).

It belongs to the UbiA prenyltransferase family. Protoheme IX farnesyltransferase subfamily.

It is found in the cell inner membrane. It catalyses the reaction heme b + (2E,6E)-farnesyl diphosphate + H2O = Fe(II)-heme o + diphosphate. It functions in the pathway porphyrin-containing compound metabolism; heme O biosynthesis; heme O from protoheme: step 1/1. In terms of biological role, converts heme B (protoheme IX) to heme O by substitution of the vinyl group on carbon 2 of heme B porphyrin ring with a hydroxyethyl farnesyl side group. In Idiomarina loihiensis (strain ATCC BAA-735 / DSM 15497 / L2-TR), this protein is Protoheme IX farnesyltransferase.